The chain runs to 330 residues: CRISPR-associated endonuclease Cas1 2 (330 aa).

Positions 156, 222, and 237 each coordinate Mn(2+).

It belongs to the CRISPR-associated endonuclease Cas1 family. Homodimer, forms a heterotetramer with a Cas2 homodimer. Requires Mg(2+) as cofactor. The cofactor is Mn(2+).

CRISPR (clustered regularly interspaced short palindromic repeat), is an adaptive immune system that provides protection against mobile genetic elements (viruses, transposable elements and conjugative plasmids). CRISPR clusters contain spacers, sequences complementary to antecedent mobile elements, and target invading nucleic acids. CRISPR clusters are transcribed and processed into CRISPR RNA (crRNA). Acts as a dsDNA endonuclease. Involved in the integration of spacer DNA into the CRISPR cassette. The polypeptide is CRISPR-associated endonuclease Cas1 2 (Thermodesulfovibrio yellowstonii (strain ATCC 51303 / DSM 11347 / YP87)).